The primary structure comprises 287 residues: Phosphatidylserine decarboxylase proenzyme (287 aa).

Active-site charge relay system; for autoendoproteolytic cleavage activity residues include D89, H146, and S252. S252 acts as the Schiff-base intermediate with substrate; via pyruvic acid; for decarboxylase activity in catalysis. S252 bears the Pyruvic acid (Ser); by autocatalysis mark.

Belongs to the phosphatidylserine decarboxylase family. PSD-B subfamily. Prokaryotic type I sub-subfamily. In terms of assembly, heterodimer of a large membrane-associated beta subunit and a small pyruvoyl-containing alpha subunit. Requires pyruvate as cofactor. In terms of processing, is synthesized initially as an inactive proenzyme. Formation of the active enzyme involves a self-maturation process in which the active site pyruvoyl group is generated from an internal serine residue via an autocatalytic post-translational modification. Two non-identical subunits are generated from the proenzyme in this reaction, and the pyruvate is formed at the N-terminus of the alpha chain, which is derived from the carboxyl end of the proenzyme. The autoendoproteolytic cleavage occurs by a canonical serine protease mechanism, in which the side chain hydroxyl group of the serine supplies its oxygen atom to form the C-terminus of the beta chain, while the remainder of the serine residue undergoes an oxidative deamination to produce ammonia and the pyruvoyl prosthetic group on the alpha chain. During this reaction, the Ser that is part of the protease active site of the proenzyme becomes the pyruvoyl prosthetic group, which constitutes an essential element of the active site of the mature decarboxylase.

It localises to the cell membrane. It carries out the reaction a 1,2-diacyl-sn-glycero-3-phospho-L-serine + H(+) = a 1,2-diacyl-sn-glycero-3-phosphoethanolamine + CO2. The protein operates within phospholipid metabolism; phosphatidylethanolamine biosynthesis; phosphatidylethanolamine from CDP-diacylglycerol: step 2/2. Catalyzes the formation of phosphatidylethanolamine (PtdEtn) from phosphatidylserine (PtdSer). The chain is Phosphatidylserine decarboxylase proenzyme from Shewanella sediminis (strain HAW-EB3).